A 130-amino-acid chain; its full sequence is Small ribosomal subunit protein uS9 (130 aa).

This sequence belongs to the universal ribosomal protein uS9 family.

The polypeptide is Small ribosomal subunit protein uS9 (Burkholderia multivorans (strain ATCC 17616 / 249)).